The following is a 381-amino-acid chain: Chaperone protein DnaJ (381 aa).

The J domain occupies 5 to 70 (DFYEVLGVGR…QKKAAYDQYG (66 aa)). The CR-type zinc finger occupies 136–214 (GCSKEIEVPT…CHGQGRKQKT (79 aa)). Positions 149, 152, 166, 169, 188, 191, 202, and 205 each coordinate Zn(2+). 4 CXXCXGXG motif repeats span residues 149 to 156 (CDACDGSG), 166 to 173 (CGTCHGHG), 188 to 195 (CPTCHGKG), and 202 to 209 (CNVCHGQG).

The protein belongs to the DnaJ family. In terms of assembly, homodimer. It depends on Zn(2+) as a cofactor.

It localises to the cytoplasm. Functionally, participates actively in the response to hyperosmotic and heat shock by preventing the aggregation of stress-denatured proteins and by disaggregating proteins, also in an autonomous, DnaK-independent fashion. Unfolded proteins bind initially to DnaJ; upon interaction with the DnaJ-bound protein, DnaK hydrolyzes its bound ATP, resulting in the formation of a stable complex. GrpE releases ADP from DnaK; ATP binding to DnaK triggers the release of the substrate protein, thus completing the reaction cycle. Several rounds of ATP-dependent interactions between DnaJ, DnaK and GrpE are required for fully efficient folding. Also involved, together with DnaK and GrpE, in the DNA replication of plasmids through activation of initiation proteins. In Vibrio cholerae serotype O1 (strain ATCC 39541 / Classical Ogawa 395 / O395), this protein is Chaperone protein DnaJ.